Reading from the N-terminus, the 1049-residue chain is FERM, ARHGEF and pleckstrin domain-containing protein 1 (1049 aa).

A disordered region spans residues methionine 1–glycine 37. 2 positions are modified to phosphoserine: serine 20 and serine 23. Phosphothreonine is present on threonine 24. The FERM domain occupies methionine 40–glutamate 320. Phosphoserine occurs at positions 340, 373, 389, 403, 427, 433, and 437. Residues phenylalanine 361–lysine 537 are disordered. Polar residues-rich tracts occupy residues threonine 371 to leucine 395 and glutamate 402 to alanine 412. The segment covering serine 435 to proline 448 has biased composition (low complexity). Polar residues-rich tracts occupy residues serine 473–glycine 492 and valine 499–proline 514. 2 positions are modified to phosphoserine: serine 513 and serine 517. The region spanning lysine 543–threonine 734 is the DH domain. Residues glutamate 763–aspartate 860 enclose the PH 1 domain. Residues serine 837, serine 876, and serine 882 each carry the phosphoserine modification. Positions asparagine 866–alanine 908 are disordered. Residue threonine 887 is modified to Phosphothreonine. 3 positions are modified to phosphoserine: serine 893, serine 900, and serine 903. In terms of domain architecture, PH 2 spans glutamate 936–serine 1033.

In terms of assembly, interacts with CADM1. Interacts with RAC1. Detected in forbrain (at protein level).

Its subcellular location is the cell membrane. The protein resides in the synapse. The protein localises to the synaptosome. It is found in the cytoplasm. It localises to the cytosol. Its subcellular location is the cell projection. The protein resides in the filopodium. The protein localises to the dendrite. It is found in the dendritic spine. Its function is as follows. May play a role in semaphorin signaling. Functions as a guanine nucleotide exchange factor for RAC1. Plays a role in the assembly and disassembly of dendritic filopodia, the formation of dendritic spines, regulation of dendrite length and ultimately the formation of synapses. The polypeptide is FERM, ARHGEF and pleckstrin domain-containing protein 1 (Farp1) (Rattus norvegicus (Rat)).